The chain runs to 288 residues: Diaminopimelate epimerase (288 aa).

The substrate site is built by N17, Q47, and N67. C76 functions as the Proton donor in the catalytic mechanism. Residues 77 to 78 (GN), N163, N196, and 214 to 215 (ER) contribute to the substrate site. C223 serves as the catalytic Proton acceptor. 224 to 225 (GS) serves as a coordination point for substrate.

The protein belongs to the diaminopimelate epimerase family. In terms of assembly, homodimer.

The protein localises to the cytoplasm. The enzyme catalyses (2S,6S)-2,6-diaminopimelate = meso-2,6-diaminopimelate. It functions in the pathway amino-acid biosynthesis; L-lysine biosynthesis via DAP pathway; DL-2,6-diaminopimelate from LL-2,6-diaminopimelate: step 1/1. Its function is as follows. Catalyzes the stereoinversion of LL-2,6-diaminopimelate (L,L-DAP) to meso-diaminopimelate (meso-DAP), a precursor of L-lysine and an essential component of the bacterial peptidoglycan. This Rhodopseudomonas palustris (strain BisB18) protein is Diaminopimelate epimerase.